A 236-amino-acid chain; its full sequence is Adenylate dimethylallyltransferase (236 aa).

It belongs to the isopentenyl transferase family.

It catalyses the reaction dimethylallyl diphosphate + AMP = N(6)-(dimethylallyl)adenosine 5'-phosphate + diphosphate. Its function is as follows. Transfers dimethylallyl groups to AMP as part of the biosynthesis of cytokinin phytohormones. This is Adenylate dimethylallyltransferase (ipt) from Pantoea agglomerans pv. gypsophilae (Erwinia herbicola).